Here is a 39-residue protein sequence, read N- to C-terminus: uncharacterized protein (39 aa).

This is an uncharacterized protein from Bacillus subtilis (strain 168).